The primary structure comprises 385 residues: Polyketide synthase 3 (385 aa).

Cys157 is a catalytic residue.

It belongs to the thiolase-like superfamily. Chalcone/stilbene synthases family. As to expression, expressed in male and female flowers, and seedlings.

The protein resides in the cytoplasm. In terms of biological role, polyketide synthase responsible for the biosynthesis of secondary metabolites. This is Polyketide synthase 3 (PKSF3) from Cannabis sativa (Hemp).